Reading from the N-terminus, the 514-residue chain is 2,3-bisphosphoglycerate-independent phosphoglycerate mutase (514 aa).

Mn(2+) contacts are provided by Asp14 and Ser64. Ser64 (phosphoserine intermediate) is an active-site residue. Substrate contacts are provided by residues His125, 155–156 (RD), Arg187, Arg193, 263–266 (RADR), and Lys336. Mn(2+) contacts are provided by Asp403, His407, Asp444, His445, and His463.

It belongs to the BPG-independent phosphoglycerate mutase family. As to quaternary structure, monomer. The cofactor is Mn(2+).

It carries out the reaction (2R)-2-phosphoglycerate = (2R)-3-phosphoglycerate. Its pathway is carbohydrate degradation; glycolysis; pyruvate from D-glyceraldehyde 3-phosphate: step 3/5. In terms of biological role, catalyzes the interconversion of 2-phosphoglycerate and 3-phosphoglycerate. The sequence is that of 2,3-bisphosphoglycerate-independent phosphoglycerate mutase from Shewanella sp. (strain ANA-3).